The sequence spans 644 residues: Large subunit GTPase 1 homolog (644 aa).

Residues 1 to 31 (MGRRRAPGGGSLGRVLIRQQTQRSRSHRHTD) form a disordered region. A phosphoserine mark is found at S93 and S97. Positions 164-430 (WRQLWRVIER…LCDCPGLVMP (267 aa)) constitute a CP-type G domain. 212 to 215 (NKAD) is a binding site for GTP. The disordered stretch occupies residues 253-345 (KEEVDSVAGD…KNAENQQVNN (93 aa)). Acidic residues predominate over residues 302 to 326 (CQEDEEEDWQTCSEEDSVPEEEEGC). GTP is bound by residues 379-386 (GYPNVGKS) and 423-426 (DCPG). Positions 618-644 (VPGKPWKKHGNRNKKEKSRRLYKHLDV) are disordered. Residues 622–644 (PWKKHGNRNKKEKSRRLYKHLDV) show a composition bias toward basic residues.

This sequence belongs to the TRAFAC class YlqF/YawG GTPase family. LSG1 subfamily.

Its subcellular location is the cytoplasm. It is found in the endoplasmic reticulum. The protein localises to the nucleus. The protein resides in the cajal body. The catalysed reaction is GTP + H2O = GDP + phosphate + H(+). Its function is as follows. Functions as a GTPase. May act by mediating the release of NMD3 from the 60S ribosomal subunit after export into the cytoplasm during the 60S ribosomal subunit maturation. This Mus musculus (Mouse) protein is Large subunit GTPase 1 homolog.